The chain runs to 1294 residues: MSQQENGDVATELIENRLSFSRIPRISLHVRDLSIVASKTNTTLVNTFSMDLPSGSVMAVMGGSGSGKTTLLNVLASKISGGLTHNGSIRYVLEDTGSEPNETEPKRAHLDGQDHPIQKHVIMAYLPQQDVLSPRLTCRETLKFAADLKLNSSERTKKLMVEQLIEELGLKDCADTLVGDNSHRGLSGGEKRRLSIGTQMISNPSIMFLDEPTTGLDAYSAFLVIKTLKKLAKEDGRTFIMSIHQPRSDILFLLDQVCILSKGNVVYCDKMDNTIPYFESIGYHVPQLVNPADYFIDLSSVDSRSDKEEAATQSRLNSLIDHWHDYERTHLQLQAESYISNATEIQIQNMTTRLPFWKQVTVLTRRNFKLNFSDYVTLISTFAEPLIIGTVCGWIYYKPDKSSIGGLRTTTACLYASTILQCYLYLLFDTYRLCEQDIALYDRERAEGSVTPLAFIVARKISLFLSDDFAMTMIFVSITYFMFGLEADARKFFYQFAVVFLCQLSCSGLSMLSVAVSRDFSKASLVGNMTFTVLSMGCGFFVNAKVMPVYVRWIKYIAFTWYSFGTLMSSTFTNSYCTTDNLDECLGNQILEVYGFPRNWITVPAVVLLCWSVGYFVVGAIILYLHKIDITLQNEVKSKQKKIKKKSPTGMKPEIQLLDDVYHQKDLEAEKGKNIHITIKLEDIDLRVIFSAPFSNWKEGNFHHETKEILQSVNAIFKPGMINAIMGPSGSGKSSLLNLISGRLKSSVFAKFDTSGSIMFNDIQVSELMFKNVCSYVSQDDDHLLAALTVKETLKYAAALRLHHLTEAERMERTDNLIRSLGLKHCENNIIGNEFVKGISGGEKRRVTMGVQLLNDPPILLLDEPTSGLDSFTSATILEILEKLCREQGKTIIITIHQPRSELFKRFGNVLLLAKSGRTAFNGSPDEMIAYFTELGYNCPSFTNVADFFLDLISVNTQNEQNEISSRARVEKILSAWKANMDNESLSPTPISEKQQYSQESFFTEYSEFVRKPANLVLAYIVNVKRQFTTTRRSFDSLMARIAQIPGLGVIFALFFAPVKHNYTSISNRLGLAQESTALYFVGMLGNLACYPTERDYFYEEYNDNVYGIAPFFLAYMTLELPLSALASVLYAVFTVLACGLPRTAGNFFATVYCSFIVTCCGEALGIMTNTFFERPGFVVNCISIILSIGTQMSGLMSLGMSRVLKGFNYLNPVGYTSMIIINFAFPGNLKLTCEDGGKNSDGTCEFANGHDVLVSYGLVRNTQKYLGIIVCVAIIYRLIAFFILKAKLEWIKW.

The Extracellular portion of the chain corresponds to 1–375 (MSQQENGDVA…RNFKLNFSDY (375 aa)). The 260-residue stretch at 28–287 (LHVRDLSIVA…FESIGYHVPQ (260 aa)) folds into the ABC transporter 1 domain. The N-linked (GlcNAc...) asparagine glycan is linked to asparagine 41. ATP is bound at residue 62–69 (GGSGSGKT). Residues asparagine 86, asparagine 101, asparagine 151, asparagine 341, asparagine 349, and asparagine 371 are each glycosylated (N-linked (GlcNAc...) asparagine). The chain crosses the membrane as a helical span at residues 376–396 (VTLISTFAEPLIIGTVCGWIY). The Cytoplasmic segment spans residues 397 to 495 (YKPDKSSIGG…EADARKFFYQ (99 aa)). The chain crosses the membrane as a helical span at residues 496–516 (FAVVFLCQLSCSGLSMLSVAV). The Extracellular portion of the chain corresponds to 517–530 (SRDFSKASLVGNMT). Asparagine 528 is a glycosylation site (N-linked (GlcNAc...) asparagine). The chain crosses the membrane as a helical span at residues 531–551 (FTVLSMGCGFFVNAKVMPVYV). The Cytoplasmic portion of the chain corresponds to 552–604 (RWIKYIAFTWYSFGTLMSSTFTNSYCTTDNLDECLGNQILEVYGFPRNWITVP). Residues 605–625 (AVVLLCWSVGYFVVGAIILYL) form a helical membrane-spanning segment. The Extracellular portion of the chain corresponds to 626 to 1038 (HKIDITLQNE…TTTRRSFDSL (413 aa)). The ABC transporter 2 domain maps to 679–941 (IKLEDIDLRV…FTELGYNCPS (263 aa)). 727 to 734 (GPSGSGKS) serves as a coordination point for ATP. N-linked (GlcNAc...) asparagine glycosylation occurs at asparagine 983. A helical membrane pass occupies residues 1039–1059 (MARIAQIPGLGVIFALFFAPV). At 1060–1120 (KHNYTSISNR…PFFLAYMTLE (61 aa)) the chain is on the cytoplasmic side. A helical membrane pass occupies residues 1121–1141 (LPLSALASVLYAVFTVLACGL). The Extracellular segment spans residues 1142-1266 (PRTAGNFFAT…YGLVRNTQKY (125 aa)). Residues 1267–1287 (LGIIVCVAIIYRLIAFFILKA) form a helical membrane-spanning segment. Residues 1288-1294 (KLEWIKW) lie on the Cytoplasmic side of the membrane.

It belongs to the ABC transporter superfamily. ABCG family. PDR (TC 3.A.1.205) subfamily.

The protein localises to the membrane. This is an uncharacterized protein from Saccharomyces cerevisiae (strain ATCC 204508 / S288c) (Baker's yeast).